Reading from the N-terminus, the 317-residue chain is Ribosome production factor 2 homolog (317 aa).

In terms of domain architecture, Brix spans 28–240 (KTAIFLRGNA…IRRVQPAESD (213 aa)). Residues 287–317 (MKGLKRSVEEREDSENEEVEIEEDVISDASE) are disordered. 4 positions are modified to phosphoserine: S293, S300, S313, and S316. The segment covering 296–317 (EREDSENEEVEIEEDVISDASE) has biased composition (acidic residues).

The protein belongs to the RPF2 family. Component of a hexameric 5S RNP precursor complex, composed of 5S RNA, rrs1, rpf2, rpl5a/rpl5b, rpl11a/rpl11b and syo1; this complex acts as a precursor for ribosome assembly.

The protein localises to the nucleus. The protein resides in the nucleolus. This is Ribosome production factor 2 homolog from Schizosaccharomyces pombe (strain 972 / ATCC 24843) (Fission yeast).